The following is a 280-amino-acid chain: Pantothenate synthetase (280 aa).

26 to 33 contacts ATP; it reads MGNLHDGH. Residue H33 is the Proton donor of the active site. Residue Q57 participates in (R)-pantoate binding. Q57 lines the beta-alanine pocket. Residue 147-150 participates in ATP binding; sequence GKKD. Q153 lines the (R)-pantoate pocket. Residue 184-187 participates in ATP binding; it reads LSSR.

It belongs to the pantothenate synthetase family. As to quaternary structure, homodimer.

The protein resides in the cytoplasm. It carries out the reaction (R)-pantoate + beta-alanine + ATP = (R)-pantothenate + AMP + diphosphate + H(+). It functions in the pathway cofactor biosynthesis; (R)-pantothenate biosynthesis; (R)-pantothenate from (R)-pantoate and beta-alanine: step 1/1. Functionally, catalyzes the condensation of pantoate with beta-alanine in an ATP-dependent reaction via a pantoyl-adenylate intermediate. This Verminephrobacter eiseniae (strain EF01-2) protein is Pantothenate synthetase.